The following is a 55-amino-acid chain: ATP synthase small subunit 6, mitochondrial (55 aa).

Residues 1–15 (MRQFDPWPVFFRREW) constitute a mitochondrion transit peptide. The chain crosses the membrane as a helical span at residues 20-39 (PFLVGFAVTGAIITKMSLGF).

Belongs to the ATPase 6 subunit family.

The protein resides in the mitochondrion inner membrane. Functionally, mitochondrial membrane ATP synthase (F(1)F(0) ATP synthase or Complex V) produces ATP from ADP in the presence of a proton gradient across the membrane which is generated by electron transport complexes of the respiratory chain. F-type ATPases consist of two structural domains, F(1) - containing the extramembraneous catalytic core and F(0) - containing the membrane proton channel, linked together by a central stalk and a peripheral stalk. During catalysis, ATP synthesis in the catalytic domain of F(1) is coupled via a rotary mechanism of the central stalk subunits to proton translocation. Part of the complex F(0) domain. Confers tolerance to several abiotic stresses (e.g. salt, mannitol, drought, oxidative and cold stresses), probably by providing additional energy needed for cell homeostasis. The chain is ATP synthase small subunit 6, mitochondrial from Solanum tuberosum (Potato).